The chain runs to 885 residues: Alanine--tRNA ligase (885 aa).

Zn(2+)-binding residues include H564, H568, C676, and H680.

Belongs to the class-II aminoacyl-tRNA synthetase family. The cofactor is Zn(2+).

Its subcellular location is the cytoplasm. It carries out the reaction tRNA(Ala) + L-alanine + ATP = L-alanyl-tRNA(Ala) + AMP + diphosphate. Its function is as follows. Catalyzes the attachment of alanine to tRNA(Ala) in a two-step reaction: alanine is first activated by ATP to form Ala-AMP and then transferred to the acceptor end of tRNA(Ala). Also edits incorrectly charged Ser-tRNA(Ala) and Gly-tRNA(Ala) via its editing domain. This chain is Alanine--tRNA ligase, found in Brucella anthropi (strain ATCC 49188 / DSM 6882 / CCUG 24695 / JCM 21032 / LMG 3331 / NBRC 15819 / NCTC 12168 / Alc 37) (Ochrobactrum anthropi).